Here is a 920-residue protein sequence, read N- to C-terminus: Androgen receptor (920 aa).

The segment at 1–559 (MEVQLGLGRV…IDYYFPPQKT (559 aa)) is modulating. An interaction with ZNF318 region spans residues 1–587 (MEVQLGLGRV…GSCKVFFKRA (587 aa)). Disordered stretches follow at residues 36-167 (NPGP…LSLL) and 195-228 (QQQQ…YLGG). The segment covering 44–91 (AASAAPPGASLLLLQQQQQQQQQQQQQQQQQQQQQQQETSPRQQQQQQ) has biased composition (low complexity). At Ser83 the chain carries Phosphoserine; by CDK9. Ser96 carries the post-translational modification Phosphoserine. Over residues 195–217 (QQQQQEAVSEGSSSGRAREASGA) the composition is skewed to low complexity. The span at 218-228 (PTSSKDNYLGG) shows a compositional bias: polar residues. Tyr225 carries the phosphotyrosine; by CSK modification. Ser258 is subject to Phosphoserine. Tyr269 is subject to Phosphotyrosine; by CSK and TNK2. Phosphotyrosine; by CSK occurs at positions 309, 348, 359, and 364. Phosphotyrosine; by CSK and TNK2 is present on Tyr365. Lys388 participates in a covalent cross-link: Glycyl lysine isopeptide (Lys-Gly) (interchain with G-Cter in SUMO). The residue at position 395 (Tyr395) is a Phosphotyrosine; by CSK. Lys521 is covalently cross-linked (Glycyl lysine isopeptide (Lys-Gly) (interchain with G-Cter in SUMO)). A phosphotyrosine; by CSK mark is found at Tyr535 and Tyr552. The interval 552-919 (YYFPPQKTCL…GKVKPIYFHT (368 aa)) is interaction with LPXN. 2 consecutive NR C4-type zinc fingers follow at residues 560–580 (CLIC…CGSC) and 596–620 (CASR…LRKC). The segment at residues 560–632 (CLICGDEASG…AGMTLGARKL (73 aa)) is a DNA-binding region (nuclear receptor). Residues 572–662 (YGALTCGSCK…TEETTQKLTV (91 aa)) form an interaction with HIPK3 region. The interval 592–919 (QKYLCASRND…GKVKPIYFHT (328 aa)) is interaction with CCAR1. Positions 625 to 919 (MTLGARKLKK…GKVKPIYFHT (295 aa)) are interaction with KAT7. Position 651 is a phosphoserine; by STK4/MST1 (Ser651). One can recognise an NR LBD domain in the interval 669 to 900 (ECQPIFLNVL…DFPEMMAEII (232 aa)). Asn706 and Arg753 together coordinate 17beta-hydroxy-5alpha-androstan-3-one. Glycyl lysine isopeptide (Lys-Gly) (interchain with G-Cter in ubiquitin) cross-links involve residues Lys846 and Lys848. Thr878 lines the 17beta-hydroxy-5alpha-androstan-3-one pocket. Tyr916 bears the Phosphotyrosine; by CSK mark.

It belongs to the nuclear hormone receptor family. NR3 subfamily. In terms of assembly, binds DNA as a homodimer. Part of a ternary complex containing AR, EFCAB6/DJBP and PARK7. Interacts with HIPK3 and NR0B2 in the presence of androgen. The ligand binding domain interacts with KAT7/HBO1 in the presence of dihydrotestosterone. Interacts with EFCAB6/DJBP, PQBP1, RANBP9, RBAK, SPDEF, SRA1, TGFB1I1 and RREB1. Interacts with ZMIZ1/ZIMP10 and ZMIZ2/ZMIP7 which both enhance its transactivation activity. Interacts with SLC30A9 and RAD54L2/ARIP4. Interacts with MACROD1 (via macro domain). Interacts via the ligand-binding domain with LXXLL and FXXLF motifs from NCOA1, NCOA2, NCOA3 and MAGEA11. Interacts (via nuclear receptor DNA binding domain and nuclear receptor ligand binding domain) with NCOA4. The AR N-terminal poly-Gln region binds Ran resulting in enhancement of AR-mediated transactivation. Ran-binding decreases as the poly-Gln length increases. Interacts with HIP1 (via coiled coil domain). Interacts (via ligand-binding domain) with TRIM68. Interacts with TNK2. Interacts with USP26. Interacts with RNF6. Interacts (regulated by RNF6 probably through polyubiquitination) with RNF14; regulates AR transcriptional activity. Interacts with PRMT2 and TRIM24. Interacts with RACK1. Interacts with RANBP10; this interaction enhances dihydrotestosterone-induced AR transcriptional activity. Interacts with PRPF6 in a hormone-independent way; this interaction enhances dihydrotestosterone-induced AR transcriptional activity. Interacts with STK4/MST1. Interacts with ZIPK/DAPK3. Interacts with LPXN. Interacts with MAK. Part of a complex containing AR, MAK and NCOA3. Interacts with CRY1. Interacts with CCAR1 and GATA2. Interacts with ZNF318. Interacts with BUD31. Interacts with ARID4A. Interacts with ARID4B. Interacts (via NR LBD domain) with ZBTB7A; the interaction is direct and androgen-dependent. Interacts with NCOR1. Interacts with NCOR2. Interacts with CRY2 in a ligand-dependent manner. Post-translationally, sumoylated on Lys-388 (major) and Lys-521. Ubiquitinated. Deubiquitinated by USP26. 'Lys-6' and 'Lys-27'-linked polyubiquitination by RNF6 modulates AR transcriptional activity and specificity. In terms of processing, phosphorylated in prostate cancer cells in response to several growth factors including EGF. Phosphorylation is induced by c-Src kinase (CSK). Tyr-535 is one of the major phosphorylation sites and an increase in phosphorylation and Src kinase activity is associated with prostate cancer progression. Phosphorylation by TNK2 enhances the DNA-binding and transcriptional activity and may be responsible for androgen-independent progression of prostate cancer. Phosphorylation at Ser-83 by CDK9 regulates AR promoter selectivity and cell growth. Phosphorylation by PAK6 leads to AR-mediated transcription inhibition. Palmitoylated by ZDHHC7 and ZDHHC21. Palmitoylation is required for plasma membrane targeting and for rapid intracellular signaling via ERK and AKT kinases and cAMP generation. As to expression, mainly expressed in heart and skeletal muscle. Expressed in basal and stromal cells of the prostate (at protein level).

Its subcellular location is the nucleus. The protein localises to the cytoplasm. With respect to regulation, AIM-100 (4-amino-5,6-biaryl-furo[2,3-d]pyrimidine) suppresses TNK2-mediated phosphorylation at Tyr-269. Inhibits the binding of the Tyr-269 phosphorylated form to androgen-responsive enhancers (AREs) and its transcriptional activity. In terms of biological role, steroid hormone receptors are ligand-activated transcription factors that regulate eukaryotic gene expression and affect cellular proliferation and differentiation in target tissues. Transcription factor activity is modulated by bound coactivator and corepressor proteins like ZBTB7A that recruits NCOR1 and NCOR2 to the androgen response elements/ARE on target genes, negatively regulating androgen receptor signaling and androgen-induced cell proliferation. Transcription activation is also down-regulated by NR0B2. Activated, but not phosphorylated, by HIPK3 and ZIPK/DAPK3. Lacks the C-terminal ligand-binding domain and may therefore constitutively activate the transcription of a specific set of genes independently of steroid hormones. The polypeptide is Androgen receptor (AR) (Homo sapiens (Human)).